A 448-amino-acid chain; its full sequence is Probable glycine dehydrogenase (decarboxylating) subunit 1 (448 aa).

This sequence belongs to the GcvP family. N-terminal subunit subfamily. In terms of assembly, the glycine cleavage system is composed of four proteins: P, T, L and H. In this organism, the P 'protein' is a heterodimer of two subunits.

It carries out the reaction N(6)-[(R)-lipoyl]-L-lysyl-[glycine-cleavage complex H protein] + glycine + H(+) = N(6)-[(R)-S(8)-aminomethyldihydrolipoyl]-L-lysyl-[glycine-cleavage complex H protein] + CO2. In terms of biological role, the glycine cleavage system catalyzes the degradation of glycine. The P protein binds the alpha-amino group of glycine through its pyridoxal phosphate cofactor; CO(2) is released and the remaining methylamine moiety is then transferred to the lipoamide cofactor of the H protein. The sequence is that of Probable glycine dehydrogenase (decarboxylating) subunit 1 from Staphylococcus epidermidis (strain ATCC 35984 / DSM 28319 / BCRC 17069 / CCUG 31568 / BM 3577 / RP62A).